The chain runs to 341 residues: S-adenosylmethionine:tRNA ribosyltransferase-isomerase (341 aa).

The protein belongs to the QueA family. As to quaternary structure, monomer.

It localises to the cytoplasm. The catalysed reaction is 7-aminomethyl-7-carbaguanosine(34) in tRNA + S-adenosyl-L-methionine = epoxyqueuosine(34) in tRNA + adenine + L-methionine + 2 H(+). It participates in tRNA modification; tRNA-queuosine biosynthesis. Transfers and isomerizes the ribose moiety from AdoMet to the 7-aminomethyl group of 7-deazaguanine (preQ1-tRNA) to give epoxyqueuosine (oQ-tRNA). The chain is S-adenosylmethionine:tRNA ribosyltransferase-isomerase from Trichlorobacter lovleyi (strain ATCC BAA-1151 / DSM 17278 / SZ) (Geobacter lovleyi).